A 694-amino-acid polypeptide reads, in one-letter code: Elongation factor G (694 aa).

The region spanning K6–T288 is the tr-type G domain. Residues A15–T22, D86–H90, and N140–D143 each bind GTP.

Belongs to the TRAFAC class translation factor GTPase superfamily. Classic translation factor GTPase family. EF-G/EF-2 subfamily.

It is found in the cytoplasm. Its function is as follows. Catalyzes the GTP-dependent ribosomal translocation step during translation elongation. During this step, the ribosome changes from the pre-translocational (PRE) to the post-translocational (POST) state as the newly formed A-site-bound peptidyl-tRNA and P-site-bound deacylated tRNA move to the P and E sites, respectively. Catalyzes the coordinated movement of the two tRNA molecules, the mRNA and conformational changes in the ribosome. The polypeptide is Elongation factor G (Legionella pneumophila (strain Paris)).